A 309-amino-acid polypeptide reads, in one-letter code: Porphobilinogen deaminase (309 aa).

Residue Cys-242 is modified to S-(dipyrrolylmethanemethyl)cysteine.

This sequence belongs to the HMBS family. In terms of assembly, monomer. Dipyrromethane serves as cofactor.

The enzyme catalyses 4 porphobilinogen + H2O = hydroxymethylbilane + 4 NH4(+). Its pathway is porphyrin-containing compound metabolism; protoporphyrin-IX biosynthesis; coproporphyrinogen-III from 5-aminolevulinate: step 2/4. In terms of biological role, tetrapolymerization of the monopyrrole PBG into the hydroxymethylbilane pre-uroporphyrinogen in several discrete steps. This chain is Porphobilinogen deaminase, found in Legionella pneumophila subsp. pneumophila (strain Philadelphia 1 / ATCC 33152 / DSM 7513).